Reading from the N-terminus, the 382-residue chain is Dual-specificity RNA methyltransferase RlmN (382 aa).

Catalysis depends on Glu95, which acts as the Proton acceptor. The Radical SAM core domain occupies 101–348; that stretch reads EDDRGTLCIS…TTVRKTRGDD (248 aa). Cys108 and Cys353 form a disulfide bridge. Residues Cys115, Cys119, and Cys122 each coordinate [4Fe-4S] cluster. S-adenosyl-L-methionine-binding positions include 179 to 180, Ser211, 233 to 235, and Asn310; these read GE and SLH. Catalysis depends on Cys353, which acts as the S-methylcysteine intermediate.

This sequence belongs to the radical SAM superfamily. RlmN family. [4Fe-4S] cluster is required as a cofactor.

It is found in the cytoplasm. The catalysed reaction is adenosine(2503) in 23S rRNA + 2 reduced [2Fe-2S]-[ferredoxin] + 2 S-adenosyl-L-methionine = 2-methyladenosine(2503) in 23S rRNA + 5'-deoxyadenosine + L-methionine + 2 oxidized [2Fe-2S]-[ferredoxin] + S-adenosyl-L-homocysteine. It carries out the reaction adenosine(37) in tRNA + 2 reduced [2Fe-2S]-[ferredoxin] + 2 S-adenosyl-L-methionine = 2-methyladenosine(37) in tRNA + 5'-deoxyadenosine + L-methionine + 2 oxidized [2Fe-2S]-[ferredoxin] + S-adenosyl-L-homocysteine. In terms of biological role, specifically methylates position 2 of adenine 2503 in 23S rRNA and position 2 of adenine 37 in tRNAs. m2A2503 modification seems to play a crucial role in the proofreading step occurring at the peptidyl transferase center and thus would serve to optimize ribosomal fidelity. This Bordetella pertussis (strain Tohama I / ATCC BAA-589 / NCTC 13251) protein is Dual-specificity RNA methyltransferase RlmN.